The chain runs to 146 residues: Transmembrane protein 207 (146 aa).

The signal sequence occupies residues Met-1–Ser-29. A helical transmembrane segment spans residues Ile-52–Cys-72.

Interacts with WWOX. As to expression, expressed in some signet-ring cell carcinoma, especially those showing high invasion and metastatic activity (at protein level).

It localises to the membrane. The sequence is that of Transmembrane protein 207 (TMEM207) from Homo sapiens (Human).